The sequence spans 430 residues: Dihydrolipoyllysine-residue acetyltransferase component of pyruvate dehydrogenase complex (430 aa).

Positions 2–77 (AFEFRLPDIG…VVGDVIVKID (76 aa)) constitute a Lipoyl-binding domain. Lys43 bears the N6-lipoyllysine mark. The disordered stretch occupies residues 80–122 (DAEDMQFKGHDDDSSSKEEPAKEEAPAEQAPVATQTEEVDENR). Over residues 84–104 (MQFKGHDDDSSSKEEPAKEEA) the composition is skewed to basic and acidic residues. One can recognise a Peripheral subunit-binding (PSBD) domain in the interval 125–162 (KAMPSVRKYAREKGVNIKAVSGSGKNGRITKEDVDAYL). A disordered region spans residues 165-199 (GAPTASNESAASATNEEVAETPAAPAAVSLEGDFP). Residues 168–192 (TASNESAASATNEEVAETPAAPAAV) are compositionally biased toward low complexity. The active site involves His401.

Belongs to the 2-oxoacid dehydrogenase family. In terms of assembly, forms a 24-polypeptide structural core with octahedral symmetry. (R)-lipoate is required as a cofactor.

It carries out the reaction N(6)-[(R)-dihydrolipoyl]-L-lysyl-[protein] + acetyl-CoA = N(6)-[(R)-S(8)-acetyldihydrolipoyl]-L-lysyl-[protein] + CoA. The pyruvate dehydrogenase complex catalyzes the overall conversion of pyruvate to acetyl-CoA and CO(2). It contains multiple copies of three enzymatic components: pyruvate dehydrogenase (E1), dihydrolipoamide acetyltransferase (E2) and lipoamide dehydrogenase (E3). The chain is Dihydrolipoyllysine-residue acetyltransferase component of pyruvate dehydrogenase complex (pdhC) from Staphylococcus aureus (strain MRSA252).